Reading from the N-terminus, the 230-residue chain is SPbeta prophage-derived putative HNH endonuclease YoqL (230 aa).

An HNH domain is found at 136 to 188; sequence CSYCGLKIEDHKILFKGTYIQSDFHKEHVDHKGANDISNCIPACKSCNSSKHD.

It belongs to the HNH nuclease family.

The protein is SPbeta prophage-derived putative HNH endonuclease YoqL (yoqL) of Bacillus subtilis (strain 168).